Reading from the N-terminus, the 648-residue chain is Threonine--tRNA ligase (648 aa).

A TGS domain is found at 1-61 (MIKITFPNTS…NENASVKLYK (61 aa)). Residues 243–542 (DHRRIGKEME…MIEHTGGKFP (300 aa)) form a catalytic region. 3 residues coordinate Zn(2+): Cys338, His389, and His519.

This sequence belongs to the class-II aminoacyl-tRNA synthetase family. In terms of assembly, homodimer. The cofactor is Zn(2+).

Its subcellular location is the cytoplasm. It catalyses the reaction tRNA(Thr) + L-threonine + ATP = L-threonyl-tRNA(Thr) + AMP + diphosphate + H(+). Catalyzes the attachment of threonine to tRNA(Thr) in a two-step reaction: L-threonine is first activated by ATP to form Thr-AMP and then transferred to the acceptor end of tRNA(Thr). Also edits incorrectly charged L-seryl-tRNA(Thr). This chain is Threonine--tRNA ligase, found in Azobacteroides pseudotrichonymphae genomovar. CFP2.